The sequence spans 538 residues: Potassium channel subfamily K member 10 (538 aa).

The Cytoplasmic portion of the chain corresponds to 1–71 (MFFLYTDFFL…GLQTVMKWKT (71 aa)). Residues 72 to 92 (VVAIFVVVVVYLVTGGLVFRA) traverse the membrane as a helical segment. Asn-144, Asn-147, and Asn-148 each carry an N-linked (GlcNAc...) asparagine glycan. The segment at residues 154–180 (LGSAFFFAGTVITTIGYGNIAPSTEGG) is an intramembrane region (pore-forming). The K(+) site is built by Thr-167, Ile-168, Gly-169, and Tyr-170. The tract at residues 167–172 (TIGYGN) is selectivity filter 1. A helical transmembrane segment spans residues 182–202 (IFCILYAIFGIPLFGFLLAGI). The Cytoplasmic segment spans residues 203–233 (GDQLGTIFGKSIARVEKVFRKKQVSQTKIRV). Residues 234 to 254 (ISTILFILAGCIVFVTIPAVI) form a helical membrane-spanning segment. Residues 263–294 (ALESIYFVVVTLTTVGFGDFVAGGNAGINYRE) constitute an intramembrane region (pore-forming). K(+)-binding residues include Thr-276, Val-277, Gly-278, and Phe-279. Residues 276–281 (TVGFGD) form a selectivity filter 2 region. Residues 299–319 (LVWFWILVGLAYFAAVLSMIG) traverse the membrane as a helical segment. The Cytoplasmic portion of the chain corresponds to 320-538 (DWLRVLSKKT…ENNSLLEDRN (219 aa)). Over residues 412–421 (SQESINNRPN) the composition is skewed to polar residues. Disordered stretches follow at residues 412–443 (SQESINNRPNNLRLKGPEQLNKHGQGASEDNI) and 510–538 (QHAELENGMIPTDTKDREPENNSLLEDRN). The segment covering 522–538 (DTKDREPENNSLLEDRN) has biased composition (basic and acidic residues).

It belongs to the two pore domain potassium channel (TC 1.A.1.8) family. Homodimer; disulfide-linked. Forms heterodimers with other 2-pore domain K(+) channel subunits, such as KCNK2, KCNK4 and KCNK18. As to expression, abundantly expressed in pancreas and kidney and to a lower level in brain, testis, colon, and small intestine. In brain, mainly expressed in cerebellum, occipital lobe, putamen, and thalamus. No expression is detected in amygdala and spinal cord. In terms of tissue distribution, strongly expressed in kidney (primarily in the proximal tubule) and pancreas. Abundantly expressed in brain.

The protein localises to the cell membrane. It catalyses the reaction K(+)(in) = K(+)(out). It carries out the reaction Rb(+)(in) = Rb(+)(out). The catalysed reaction is Cs(+)(in) = Cs(+)(out). Its activity is regulated as follows. Activated by various stimuli including acidic pH, anesthetics chloroform, halothane and isoflurane, mechanical stretch, lipids such as arachidonic, docosahexaenoic and linoleic polyunsaturated fatty acids and lysophosphatidylcholine and lysophosphatidylinositol lysophospholipids. Inhibited by norfluoxetine, the active metabolite of antidepressant fluoxetine (Prozac). In terms of biological role, k(+) channel that conducts voltage-dependent outward rectifying currents upon membrane depolarization. Voltage sensing is coupled to K(+) electrochemical gradient in an 'ion flux gating' mode where outward but not inward ion flow opens the gate. Converts to voltage-independent 'leak' conductance mode upon stimulation by various stimuli including mechanical membrane stretch, acidic pH, heat and lipids. Homo- and heterodimerizes to form functional channels with distinct regulatory and gating properties. In trigeminal ganglia sensory neurons, the heterodimer of KCNK10/TREK-2 and KCNK18/TRESK inhibits neuronal firing and neurogenic inflammation by stabilizing the resting membrane potential at K(+) equilibrium potential as well as by regulating the threshold of action potentials and the spike frequency. Permeable to other monovalent ions such as Rb(+) and Cs(+). This is Potassium channel subfamily K member 10 from Homo sapiens (Human).